The sequence spans 222 residues: MKLLAPSILAGDWWCIGEQIQATIRGGADILHYDVMDGHFVPNITAGYEILSHIRKRASLPIDAHLMIENPDKYIPKFVEAGANWISVHIENNYHIHRTLQLIKELGAKAGVVVNPGTSLSAIEEALYYADYVLLMSVNPGFSGQKFIERSIERLRILKEMRDRINPSCLIEIDGGIKENNIAEVVRAGADVVVVGSGIFGAKDIEAQTRKLKSLMLSAVSV.

S7 contacts substrate. Residues H32, D34, and H65 each coordinate a divalent metal cation. The active-site Proton acceptor is the D34. Substrate-binding positions include H65, 141–144 (GFSG), 174–176 (DGG), and 196–197 (GS). Residue D174 participates in a divalent metal cation binding. Catalysis depends on D174, which acts as the Proton donor.

Belongs to the ribulose-phosphate 3-epimerase family. A divalent metal cation serves as cofactor.

It carries out the reaction D-ribulose 5-phosphate = D-xylulose 5-phosphate. It participates in carbohydrate degradation. Functionally, catalyzes the reversible epimerization of D-ribulose 5-phosphate to D-xylulose 5-phosphate. The chain is Ribulose-phosphate 3-epimerase from Aquifex aeolicus (strain VF5).